The chain runs to 61 residues: Cytotoxin homolog 3 (61 aa).

Disulfide bonds link Cys-3-Cys-22, Cys-15-Cys-39, Cys-43-Cys-54, and Cys-55-Cys-60.

It belongs to the three-finger toxin family. Short-chain subfamily. Orphan group XV sub-subfamily. In terms of tissue distribution, expressed by the venom gland.

Its subcellular location is the secreted. The protein resides in the target cell membrane. Functionally, has low cytotoxic activity. The polypeptide is Cytotoxin homolog 3 (Naja melanoleuca (Forest cobra)).